An 882-amino-acid chain; its full sequence is Cadherin-1 (882 aa).

Residues 1–23 form the signal peptide; it reads MGPWSRSLSALCCCCRCNPWLCR. A propeptide spanning residues 24 to 154 is cleaved from the precursor; the sequence is EPEPCIPGFG…PHHGLRRQKR (131 aa). Residues 117-137 are disordered; it reads EVSAHHHHHHSHHDSPSGTQT. Cadherin domains follow at residues 154 to 262, 263 to 375, 376 to 486, 487 to 595, and 594 to 702; these read RDWV…KPQF, TQEV…APRF, NPTT…APIF, VPPQ…GPVP, and VPEP…RPAE. Residues 155–709 lie on the Extracellular side of the membrane; it reads DWVIPPISCP…PAEAGLQVPA (555 aa). The O-linked (Man...) serine glycan is linked to S280. O-linked (Man...) threonine glycans are attached at residues T285, T358, T470, T472, and T509. N558 is a glycosylation site (N-linked (GlcNAc...) asparagine). 3 O-linked (Man...) threonine glycosylation sites follow: T576, T578, and T580. An N-linked (GlcNAc...) asparagine glycan is attached at N637. A helical membrane pass occupies residues 710-730; it reads ILGILGGILAFLILILLLLLL. Over 731–882 the chain is Cytoplasmic; the sequence is VRRRRVVKEP…ADMYGGGEDD (152 aa). Residues 747 to 767 form a disordered region; sequence DTRDNVYYYDEEGGGEEDQDF. A phosphotyrosine; by SRC mark is found at Y753, Y754, and Y755. Residues 755 to 767 show a composition bias toward acidic residues; the sequence is YDEEGGGEEDQDF. Positions 758 to 769 are required for binding CTNND1 and PSEN1; that stretch reads EGGGEEDQDFDL. Phosphoserine is present on residues S770, S793, S838, S840, and S846. Residues 811–882 are required for binding alpha, beta and gamma catenins; the sequence is IDENLKAADS…ADMYGGGEDD (72 aa).

As to quaternary structure, homodimer; disulfide-linked. Component of an E-cadherin/ catenin adhesion complex composed of at least E-cadherin/CDH1, beta-catenin/CTNNB1 or gamma-catenin/JUP, and potentially alpha-catenin/CTNNA1; the complex is located to adherens junctions. Found in a complex composed of CDH1, RAP1A and PKP3; PKP3 acts as a scaffold protein within the complex, the complex is required for CDH1 localization to mature desmosome cell junctions. Interacts with the TRPV4 and CTNNB1 complex. Interacts with CTNND1. The stable association of CTNNA1 is controversial as CTNNA1 was shown not to bind to F-actin when assembled in the complex. Alternatively, the CTNNA1-containing complex may be linked to F-actin by other proteins such as LIMA1. Interaction with PSEN1, cleaves CDH1 resulting in the disassociation of cadherin-based adherens junctions (CAJs). Interacts with AJAP1 and DLGAP5. Interacts with TBC1D2. Interacts with CAV1. Interacts with PIP5K1C. Interacts with RAB8B. Interacts with DDR1; this stabilizes CDH1 at the cell surface and inhibits its internalization. Interacts with RAPGEF2. Interacts with KLRG1. Forms a ternary complex composed of ADAM10, CADH1 and EPHA4; within the complex, CADH1 is cleaved by ADAM10 which disrupts adherens junctions. Interacts with SPEF1. Interacts with CTNNB1 and PKP2. Interacts with AMOTL2; the interaction may facilitate binding of radial actin fibers to cell junction complexes. Interacts with DSG3; the interaction is required for CDH1 localization to developing adherens junctions. Post-translationally, during apoptosis or with calcium influx, cleaved by a membrane-bound metalloproteinase (ADAM10), PS1/gamma-secretase and caspase-3. Processing by the metalloproteinase, induced by calcium influx, causes disruption of cell-cell adhesion and the subsequent release of beta-catenin into the cytoplasm. The residual membrane-tethered cleavage product is rapidly degraded via an intracellular proteolytic pathway. Cleavage by caspase-3 releases the cytoplasmic tail resulting in disintegration of the actin microfilament system. The gamma-secretase-mediated cleavage promotes disassembly of adherens junctions. During development of the cochlear organ of Corti, cleavage by ADAM10 at adherens junctions promotes pillar cell separation. N-glycosylation at Asn-637 is essential for expression, folding and trafficking. Addition of bisecting N-acetylglucosamine by MGAT3 modulates its cell membrane location. In terms of processing, ubiquitinated by a SCF complex containing SKP2, which requires prior phosphorylation by CK1/CSNK1A1. Ubiquitinated by CBLL1/HAKAI, requires prior phosphorylation at Tyr-754. Post-translationally, O-glycosylated. O-manosylated by TMTC1, TMTC2, TMTC3 or TMTC4. Thr-285 and Thr-509 are O-mannosylated by TMTC2 or TMTC4 but not TMTC1 or TMTC3.

Its subcellular location is the cell junction. It localises to the adherens junction. It is found in the cell membrane. The protein resides in the endosome. The protein localises to the golgi apparatus. Its subcellular location is the trans-Golgi network. It localises to the cytoplasm. It is found in the desmosome. In terms of biological role, cadherins are calcium-dependent cell adhesion proteins. They preferentially interact with themselves in a homophilic manner in connecting cells; cadherins may thus contribute to the sorting of heterogeneous cell types. CDH1 is involved in mechanisms regulating cell-cell adhesions, mobility and proliferation of epithelial cells. Promotes organization of radial actin fiber structure and cellular response to contractile forces, via its interaction with AMOTL2 which facilitates anchoring of radial actin fibers to CDH1 junction complexes at the cell membrane. Plays a role in the early stages of desmosome cell-cell junction formation via facilitating the recruitment of DSG2 and DSP to desmosome plaques. Has a potent invasive suppressor role. It is a ligand for integrin alpha-E/beta-7. Its function is as follows. E-Cad/CTF2 promotes non-amyloidogenic degradation of Abeta precursors. Has a strong inhibitory effect on APP C99 and C83 production. In Bos taurus (Bovine), this protein is Cadherin-1 (CDH1).